A 616-amino-acid polypeptide reads, in one-letter code: Proline--tRNA ligase (616 aa).

The protein belongs to the class-II aminoacyl-tRNA synthetase family. ProS type 1 subfamily. Homodimer.

It is found in the cytoplasm. The enzyme catalyses tRNA(Pro) + L-proline + ATP = L-prolyl-tRNA(Pro) + AMP + diphosphate. In terms of biological role, catalyzes the attachment of proline to tRNA(Pro) in a two-step reaction: proline is first activated by ATP to form Pro-AMP and then transferred to the acceptor end of tRNA(Pro). As ProRS can inadvertently accommodate and process non-cognate amino acids such as alanine and cysteine, to avoid such errors it has two additional distinct editing activities against alanine. One activity is designated as 'pretransfer' editing and involves the tRNA(Pro)-independent hydrolysis of activated Ala-AMP. The other activity is designated 'posttransfer' editing and involves deacylation of mischarged Ala-tRNA(Pro). The misacylated Cys-tRNA(Pro) is not edited by ProRS. The polypeptide is Proline--tRNA ligase (Lactococcus lactis subsp. lactis (strain IL1403) (Streptococcus lactis)).